The chain runs to 141 residues: Transcription antitermination protein NusB (141 aa).

Belongs to the NusB family.

Functionally, involved in transcription antitermination. Required for transcription of ribosomal RNA (rRNA) genes. Binds specifically to the boxA antiterminator sequence of the ribosomal RNA (rrn) operons. This is Transcription antitermination protein NusB from Neisseria gonorrhoeae (strain ATCC 700825 / FA 1090).